The chain runs to 320 residues: MQTRNAFSWIKKEITRSISVLLMIYIITRAPISNAYPIFAQQGYENPREATGRIVCANCHLANKPVDIEVPQAVLPDTVFEAVVRIPYDMQVKQVLANGKKGALNVGAVLILPEGFELAPPHRLSPQIKEKIGNLSFQSYRPTKKNILVIGPVPGKKYSEITFPILSPDPATKRDVYFLKYPLYVGGNRGRGQIYPDGSKSNNNVSNATATGVVKQIIRKEKGGYEITIVDASDGSEVIDIIPPGPELLVSEGESIKLDQPLTSNPNVGGFGQGDAEIVLQDPLRVQGLLLFLASIILAQILLVLKKKQFEKVQLSEMNF.

The N-terminal stretch at 1-35 is a signal peptide; that stretch reads MQTRNAFSWIKKEITRSISVLLMIYIITRAPISNA. Residues Y36, C56, C59, and H60 each coordinate heme. Residues 286 to 305 form a helical membrane-spanning segment; it reads VQGLLLFLASIILAQILLVL.

Belongs to the cytochrome f family. The 4 large subunits of the cytochrome b6-f complex are cytochrome b6, subunit IV (17 kDa polypeptide, petD), cytochrome f and the Rieske protein, while the 4 small subunits are PetG, PetL, PetM and PetN. The complex functions as a dimer. The cofactor is heme.

It localises to the plastid. The protein localises to the chloroplast thylakoid membrane. Functionally, component of the cytochrome b6-f complex, which mediates electron transfer between photosystem II (PSII) and photosystem I (PSI), cyclic electron flow around PSI, and state transitions. The polypeptide is Cytochrome f (petA) (Pisum sativum (Garden pea)).